A 313-amino-acid chain; its full sequence is Ornithine carbamoyltransferase (313 aa).

Carbamoyl phosphate contacts are provided by residues 61-64 (STRT), Q88, R112, and 139-142 (HPCQ). Residues N170, D228, and 232–233 (SM) each bind L-ornithine. Carbamoyl phosphate is bound by residues 268–269 (CL) and R296.

It belongs to the aspartate/ornithine carbamoyltransferase superfamily. OTCase family.

The protein resides in the cytoplasm. The catalysed reaction is carbamoyl phosphate + L-ornithine = L-citrulline + phosphate + H(+). Its pathway is amino-acid biosynthesis; L-arginine biosynthesis; L-arginine from L-ornithine and carbamoyl phosphate: step 1/3. Functionally, reversibly catalyzes the transfer of the carbamoyl group from carbamoyl phosphate (CP) to the N(epsilon) atom of ornithine (ORN) to produce L-citrulline. The protein is Ornithine carbamoyltransferase of Bordetella parapertussis (strain 12822 / ATCC BAA-587 / NCTC 13253).